Consider the following 392-residue polypeptide: MEFVYDVAESAVSPAVIKVIGLGGGGCNAINNMVANNVRSVEFISANTDAQSLAKNHAAKRIQLGTNLTRGLGAGANPDIGRAAAQEDREAIEEAIRGANMLFITTGMGGGTGTGSAPVVAEIAKSLGILTVAVVTRPFSYEGKRVHVAQAGLEQLKEHVDSLIIIPNDKLMTALGEDVTMREAFRAADNVLRDAVAGISEVVTCPSEIINLDFADVKTVMSNRGIAMMGSGYAQGIDRARMATDQAISSPLLDDVTLDGARGVLVNITTAPGCLKMSELSEVMKIVNQSAHPDLECKFGAAEDETMSEDAIRITIIATGLKEKGAVDPTPEREVEAVAPSKQEQSHIVEGMIRTNRGIRTMNLTAADFDNQSVLDDFEIPAILRRQHNSDK.

GTP is bound by residues 24–28 (GGGCN), 111–113 (GTG), Glu142, Arg145, and Asp189.

The protein belongs to the FtsZ family. As to quaternary structure, homodimer. Polymerizes to form a dynamic ring structure in a strictly GTP-dependent manner. Interacts directly with several other division proteins.

It is found in the cytoplasm. Its function is as follows. Essential cell division protein that forms a contractile ring structure (Z ring) at the future cell division site. The regulation of the ring assembly controls the timing and the location of cell division. One of the functions of the FtsZ ring is to recruit other cell division proteins to the septum to produce a new cell wall between the dividing cells. Binds GTP and shows GTPase activity. This is Cell division protein FtsZ from Neisseria gonorrhoeae.